Reading from the N-terminus, the 268-residue chain is Protein limb expression 1 homolog (268 aa).

Belongs to the LIX1 family. As to quaternary structure, interacts with ft (via intracellular domain) and ds (via intracellular domain).

Its subcellular location is the apical cell membrane. The protein resides in the cytoplasm. Component of the Fat (ft) signaling pathway that functions in normal development of various organs such as the wing and leg. In developing imaginal disks, involved in regulating both the protein levels and apical localization of ft and ds. Involved in establishing planar cell polarity (PCP) along the anterior-posterior axis of the wing (the early Fz signaling event), probably by acting upstream of ds and ft to regulate Fz activity. This chain is Protein limb expression 1 homolog, found in Drosophila melanogaster (Fruit fly).